Consider the following 974-residue polypeptide: Leucine-rich repeat receptor-like kinase protein SUNN (974 aa).

The signal sequence occupies residues 1–20 (MKNITCYLLLLCMLFTTCYS). N75, N104, N123, and N136 each carry an N-linked (GlcNAc...) asparagine glycan. LRR repeat units lie at residues 92–116 (LNML…LSKL), 117–141 (TSLR…TFGM), 143–165 (KLEA…IVSL), 166–188 (MKLK…SYSE), 189–213 (FQKL…LSKL), 238–262 (IKSL…LGNL), 263–286 (ENLD…LSSM), 288–309 (SLMS…TFSK), 310–334 (LKNL…IGDL), 335–358 (PNLE…LGSN), 360–382 (KFIY…LCKS), 383–406 (KKLK…IGPC), 407–430 (KSLE…IFQL), 431–454 (PSVQ…ISGN), 456–477 (LGNL…MKNL), 478–501 (RSLQ…VFAL), 503–525 (VLTR…VTQC), 527–549 (SLTA…MKNL), 550–573 (KVLS…IRFM), and 574–598 (TSLT…QFLV). N250 and N274 each carry an N-linked (GlcNAc...) asparagine glycan. 2 N-linked (GlcNAc...) asparagine glycosylation sites follow: N312 and N346. 2 N-linked (GlcNAc...) asparagine glycosylation sites follow: N508 and N513. N556 and N585 each carry an N-linked (GlcNAc...) asparagine glycan. Residues 635 to 655 (VVIAIVFATAVLMVIVTLHMM) traverse the membrane as a helical segment. The Protein kinase domain maps to 685 to 972 (LKEENIIGKG…PPHSTSHNLI (288 aa)). ATP contacts are provided by residues 691–699 (IGKGGAGIV) and K713. The active-site Proton acceptor is the D810.

Belongs to the protein kinase superfamily. Ser/Thr protein kinase family. In terms of tissue distribution, expressed in roots and shoots. Expressed in the vasculature of leaves, petioles, stems and roots.

It localises to the cell membrane. It catalyses the reaction L-seryl-[protein] + ATP = O-phospho-L-seryl-[protein] + ADP + H(+). The catalysed reaction is L-threonyl-[protein] + ATP = O-phospho-L-threonyl-[protein] + ADP + H(+). LRR receptor kinase involved in the regulation of root growth and root nodule organogenesis. Involved in long distance nodulation signaling events. Involved in the autoregulation of nodulation (AON), a long distance systemic signaling from root to shoot and back again, which allows legumes to limit the number of root nodules formed based on available nitrogen and previous rhizobial colonization. Acts from shoot to root to control AON. Interacts with CLE12 and CLE13 signaling to control nodule numbers. Required for the modulation of shoot-to-root auxin transport in response to altered nitrogen tissue concentrations and in the absence of rhizobia. Shoot-to-root auxin transport influences lateral root density and length. Involved in the regulation of root colonization by arbuscular mycorrhizal (AM) fungi. Interacts with CLE33 and CL53 signaling to repress strigolactone biosynthetic genes and strigolactone content in the roots, and consequently reduces the promotion of further colonization by AM fungi. This Medicago truncatula (Barrel medic) protein is Leucine-rich repeat receptor-like kinase protein SUNN.